The sequence spans 149 residues: MNVFLSKYVNGVDKKSRVSVPANYRAVLGQELFNGVIAYPSIRNKCIEACGISHIEKLRQMIETLDPYSEERDAFETIIFGEALQLSFDSEGRVMLPQSLMQHAGIEEQACFVGKGVIFEIWQPQNFEKYLNSAQKIAYEKRLTLRNAN.

2 consecutive SpoVT-AbrB domains span residues 7 to 54 (KYVN…GISH) and 83 to 126 (ALQL…QPQN).

Belongs to the MraZ family. In terms of assembly, forms oligomers.

It localises to the cytoplasm. The protein resides in the nucleoid. This chain is Transcriptional regulator MraZ, found in Rickettsia canadensis (strain McKiel).